We begin with the raw amino-acid sequence, 393 residues long: Probable N-acetyl-LL-diaminopimelate aminotransferase (393 aa).

Lys-231 carries the N6-(pyridoxal phosphate)lysine modification.

The protein belongs to the class-I pyridoxal-phosphate-dependent aminotransferase family. As to quaternary structure, homodimer. Requires pyridoxal 5'-phosphate as cofactor.

The protein localises to the cytoplasm. It catalyses the reaction N-acetyl-(2S,6S)-2,6-diaminopimelate + 2-oxoglutarate = L-2-acetamido-6-oxoheptanedioate + L-glutamate. It participates in amino-acid biosynthesis; L-lysine biosynthesis via DAP pathway; LL-2,6-diaminopimelate from (S)-tetrahydrodipicolinate (acetylase route): step 2/3. Essential for murein biosynthesis. Probably catalyzes the conversion of L-2-acetamido-6-oxopimelate to N-acetyl-LL-2,6-diaminopimelate. The sequence is that of Probable N-acetyl-LL-diaminopimelate aminotransferase from Bacillus subtilis (strain 168).